We begin with the raw amino-acid sequence, 529 residues long: tRNA-2-methylthio-N(6)-dimethylallyladenosine synthase 1 (529 aa).

The interval 1–21 (MTQDHIVTERPPATRNDTAGN) is disordered. In terms of domain architecture, MTTase N-terminal spans 25 to 141 (RTYEVRTLGC…LPVLLERSRH (117 aa)). Residues C34, C70, C104, C178, C182, and C185 each contribute to the [4Fe-4S] cluster site. Residues 164-407 (RDSAYAAWVS…VALQERISLE (244 aa)) form the Radical SAM core domain. In terms of domain architecture, TRAM spans 410-480 (RSLVGTRQEL…PHHLIADGPL (71 aa)). The disordered stretch occupies residues 481–504 (LQHRRTPAGDASERGQTPTTRGVG).

The protein belongs to the methylthiotransferase family. MiaB subfamily. As to quaternary structure, monomer. It depends on [4Fe-4S] cluster as a cofactor.

The protein localises to the cytoplasm. It catalyses the reaction N(6)-dimethylallyladenosine(37) in tRNA + (sulfur carrier)-SH + AH2 + 2 S-adenosyl-L-methionine = 2-methylsulfanyl-N(6)-dimethylallyladenosine(37) in tRNA + (sulfur carrier)-H + 5'-deoxyadenosine + L-methionine + A + S-adenosyl-L-homocysteine + 2 H(+). Catalyzes the methylthiolation of N6-(dimethylallyl)adenosine (i(6)A), leading to the formation of 2-methylthio-N6-(dimethylallyl)adenosine (ms(2)i(6)A) at position 37 in tRNAs that read codons beginning with uridine. In Mycobacterium marinum (strain ATCC BAA-535 / M), this protein is tRNA-2-methylthio-N(6)-dimethylallyladenosine synthase 1.